A 201-amino-acid polypeptide reads, in one-letter code: Ribonuclease HII (201 aa).

The RNase H type-2 domain occupies D12–Q201. The a divalent metal cation site is built by D18, E19, and D110.

It belongs to the RNase HII family. Mn(2+) serves as cofactor. Mg(2+) is required as a cofactor.

It is found in the cytoplasm. It carries out the reaction Endonucleolytic cleavage to 5'-phosphomonoester.. Functionally, endonuclease that specifically degrades the RNA of RNA-DNA hybrids. The sequence is that of Ribonuclease HII from Pseudomonas aeruginosa (strain ATCC 15692 / DSM 22644 / CIP 104116 / JCM 14847 / LMG 12228 / 1C / PRS 101 / PAO1).